A 189-amino-acid polypeptide reads, in one-letter code: MIINFKNHFLIAMPGLKDPLFKNSVIYMCKHDNNGAMGIIINKKIKNLTIQKILHQLKINIKSSNTLDFKNPVIIGGPILEDRGFILHTFKKKFTTSTHISNDLSITTSRDILEYIANLNNPKNILMALGHCIWKQHQLEQEIAKNIWLTTPADIDIIFNTPISEKWKKSMYSIGIMNILQLTSEIGHA.

This sequence belongs to the UPF0301 (AlgH) family.

The protein is UPF0301 protein bbp_491 of Buchnera aphidicola subsp. Baizongia pistaciae (strain Bp).